Consider the following 382-residue polypeptide: uncharacterized protein (382 aa).

The next 12 helical transmembrane spans lie at Gly-14 to Ala-34, Val-45 to Ile-65, Phe-79 to Ala-99, Phe-102 to Ser-122, Leu-131 to Ser-151, Leu-157 to Phe-177, Leu-204 to Pro-224, Ala-235 to Ile-255, Val-270 to Pro-290, Ala-291 to Cys-311, Ala-325 to Met-345, and Phe-348 to Leu-368.

The protein belongs to the major facilitator superfamily. YcaD (TC 2.A.1.26) family.

It localises to the cell inner membrane. This is an uncharacterized protein from Shigella sonnei (strain Ss046).